The chain runs to 157 residues: Cyclic pyranopterin monophosphate synthase (157 aa).

Substrate-binding positions include 73-75 (LCH) and 110-111 (ME). The active site involves Asp-125.

It belongs to the MoaC family. Homohexamer; trimer of dimers.

It carries out the reaction (8S)-3',8-cyclo-7,8-dihydroguanosine 5'-triphosphate = cyclic pyranopterin phosphate + diphosphate. It functions in the pathway cofactor biosynthesis; molybdopterin biosynthesis. Functionally, catalyzes the conversion of (8S)-3',8-cyclo-7,8-dihydroguanosine 5'-triphosphate to cyclic pyranopterin monophosphate (cPMP). The chain is Cyclic pyranopterin monophosphate synthase from Pseudomonas fluorescens (strain SBW25).